We begin with the raw amino-acid sequence, 61 residues long: Photosystem II reaction center protein K (61 aa).

The propeptide occupies 1–24 (MLNIFSLICICLNSALHSSSFFFA). A helical transmembrane segment spans residues 32–52 (FFNPIVDFMPVIPVLFFLLAL).

This sequence belongs to the PsbK family. In terms of assembly, PSII is composed of 1 copy each of membrane proteins PsbA, PsbB, PsbC, PsbD, PsbE, PsbF, PsbH, PsbI, PsbJ, PsbK, PsbL, PsbM, PsbT, PsbX, PsbY, PsbZ, Psb30/Ycf12, at least 3 peripheral proteins of the oxygen-evolving complex and a large number of cofactors. It forms dimeric complexes.

The protein localises to the plastid. It localises to the chloroplast thylakoid membrane. Its function is as follows. One of the components of the core complex of photosystem II (PSII). PSII is a light-driven water:plastoquinone oxidoreductase that uses light energy to abstract electrons from H(2)O, generating O(2) and a proton gradient subsequently used for ATP formation. It consists of a core antenna complex that captures photons, and an electron transfer chain that converts photonic excitation into a charge separation. This is Photosystem II reaction center protein K from Drimys granadensis.